The sequence spans 73 residues: Biotin/lipoyl attachment protein (73 aa).

Residues 2-69 (TVSIQMAGNL…NEGDVLLELS (68 aa)) form the Biotinyl-binding domain. Lys35 is subject to N6-biotinyllysine; alternate. At Lys35 the chain carries N6-lipoyllysine; alternate.

In terms of processing, can be both biotinylated and lipoylated on Lys-35 upon overexpression in E.coli depending on the growth medium; the nature of the modification in situ in B.subtilis is unknown.

The sequence is that of Biotin/lipoyl attachment protein (yngHB) from Bacillus subtilis (strain 168).